Reading from the N-terminus, the 253-residue chain is Ubiquinone/menaquinone biosynthesis C-methyltransferase UbiE (253 aa).

S-adenosyl-L-methionine contacts are provided by residues T76, D97, 125–126, and S142; that span reads NA.

Belongs to the class I-like SAM-binding methyltransferase superfamily. MenG/UbiE family.

The enzyme catalyses a 2-demethylmenaquinol + S-adenosyl-L-methionine = a menaquinol + S-adenosyl-L-homocysteine + H(+). It carries out the reaction a 2-methoxy-6-(all-trans-polyprenyl)benzene-1,4-diol + S-adenosyl-L-methionine = a 5-methoxy-2-methyl-3-(all-trans-polyprenyl)benzene-1,4-diol + S-adenosyl-L-homocysteine + H(+). It participates in quinol/quinone metabolism; menaquinone biosynthesis; menaquinol from 1,4-dihydroxy-2-naphthoate: step 2/2. The protein operates within cofactor biosynthesis; ubiquinone biosynthesis. Functionally, methyltransferase required for the conversion of demethylmenaquinol (DMKH2) to menaquinol (MKH2) and the conversion of 2-polyprenyl-6-methoxy-1,4-benzoquinol (DDMQH2) to 2-polyprenyl-3-methyl-6-methoxy-1,4-benzoquinol (DMQH2). The sequence is that of Ubiquinone/menaquinone biosynthesis C-methyltransferase UbiE from Xanthomonas axonopodis pv. citri (strain 306).